The following is a 420-amino-acid chain: Serine hydroxymethyltransferase (420 aa).

Residues leucine 123 and 127 to 129 (GHL) contribute to the (6S)-5,6,7,8-tetrahydrofolate site. Lysine 232 is modified (N6-(pyridoxal phosphate)lysine). Residue 357 to 359 (SPF) coordinates (6S)-5,6,7,8-tetrahydrofolate.

Belongs to the SHMT family. As to quaternary structure, homodimer. Requires pyridoxal 5'-phosphate as cofactor.

It is found in the cytoplasm. The enzyme catalyses (6R)-5,10-methylene-5,6,7,8-tetrahydrofolate + glycine + H2O = (6S)-5,6,7,8-tetrahydrofolate + L-serine. It participates in one-carbon metabolism; tetrahydrofolate interconversion. It functions in the pathway amino-acid biosynthesis; glycine biosynthesis; glycine from L-serine: step 1/1. Its function is as follows. Catalyzes the reversible interconversion of serine and glycine with tetrahydrofolate (THF) serving as the one-carbon carrier. This reaction serves as the major source of one-carbon groups required for the biosynthesis of purines, thymidylate, methionine, and other important biomolecules. Also exhibits THF-independent aldolase activity toward beta-hydroxyamino acids, producing glycine and aldehydes, via a retro-aldol mechanism. The protein is Serine hydroxymethyltransferase of Streptococcus pyogenes serotype M2 (strain MGAS10270).